We begin with the raw amino-acid sequence, 323 residues long: Aspartate carbamoyltransferase catalytic subunit (323 aa).

Carbamoyl phosphate-binding residues include Arg-55 and Thr-56. Residue Lys-83 coordinates L-aspartate. Arg-105, His-138, and Gln-141 together coordinate carbamoyl phosphate. Positions 181 and 235 each coordinate L-aspartate. 2 residues coordinate carbamoyl phosphate: Gly-276 and Pro-277.

Belongs to the aspartate/ornithine carbamoyltransferase superfamily. ATCase family. In terms of assembly, heterododecamer (2C3:3R2) of six catalytic PyrB chains organized as two trimers (C3), and six regulatory PyrI chains organized as three dimers (R2).

It catalyses the reaction carbamoyl phosphate + L-aspartate = N-carbamoyl-L-aspartate + phosphate + H(+). The protein operates within pyrimidine metabolism; UMP biosynthesis via de novo pathway; (S)-dihydroorotate from bicarbonate: step 2/3. Functionally, catalyzes the condensation of carbamoyl phosphate and aspartate to form carbamoyl aspartate and inorganic phosphate, the committed step in the de novo pyrimidine nucleotide biosynthesis pathway. The protein is Aspartate carbamoyltransferase catalytic subunit of Corynebacterium aurimucosum (strain ATCC 700975 / DSM 44827 / CIP 107346 / CN-1) (Corynebacterium nigricans).